The primary structure comprises 580 residues: 2-succinyl-5-enolpyruvyl-6-hydroxy-3-cyclohexene-1-carboxylate synthase (580 aa).

It belongs to the TPP enzyme family. MenD subfamily. In terms of assembly, homodimer. Mg(2+) is required as a cofactor. Mn(2+) serves as cofactor. It depends on thiamine diphosphate as a cofactor.

The enzyme catalyses isochorismate + 2-oxoglutarate + H(+) = 5-enolpyruvoyl-6-hydroxy-2-succinyl-cyclohex-3-ene-1-carboxylate + CO2. Its pathway is quinol/quinone metabolism; 1,4-dihydroxy-2-naphthoate biosynthesis; 1,4-dihydroxy-2-naphthoate from chorismate: step 2/7. It participates in quinol/quinone metabolism; menaquinone biosynthesis. Functionally, catalyzes the thiamine diphosphate-dependent decarboxylation of 2-oxoglutarate and the subsequent addition of the resulting succinic semialdehyde-thiamine pyrophosphate anion to isochorismate to yield 2-succinyl-5-enolpyruvyl-6-hydroxy-3-cyclohexene-1-carboxylate (SEPHCHC). The polypeptide is 2-succinyl-5-enolpyruvyl-6-hydroxy-3-cyclohexene-1-carboxylate synthase (Bacillus pumilus (strain SAFR-032)).